Reading from the N-terminus, the 96-residue chain is UPF0235 protein VC0395_A0010/VC395_0502 (96 aa).

Belongs to the UPF0235 family.

This is UPF0235 protein VC0395_A0010/VC395_0502 from Vibrio cholerae serotype O1 (strain ATCC 39541 / Classical Ogawa 395 / O395).